Consider the following 181-residue polypeptide: Nucleoside triphosphate/diphosphate phosphatase (181 aa).

Catalysis depends on arginine 26, which acts as the Proton donor. The Mg(2+) site is built by asparagine 90, aspartate 106, aspartate 108, aspartate 110, aspartate 123, and glutamate 126.

Belongs to the Ntdp family. It depends on Mg(2+) as a cofactor.

It catalyses the reaction a ribonucleoside 5'-triphosphate + H2O = a ribonucleoside 5'-diphosphate + phosphate + H(+). The enzyme catalyses a ribonucleoside 5'-diphosphate + H2O = a ribonucleoside 5'-phosphate + phosphate + H(+). In terms of biological role, has nucleoside phosphatase activity towards nucleoside triphosphates and nucleoside diphosphates. This Ligilactobacillus salivarius (strain UCC118) (Lactobacillus salivarius) protein is Nucleoside triphosphate/diphosphate phosphatase.